Consider the following 173-residue polypeptide: MKAFFNDPFTPFGKWLSQPFYVHGLTFLLLLSAVIFRPVLDYIEGSSRFHEIENELAVKRSELLHQQKILTSLQQQSESRKLSPELAAQIIPLNKQIQRLAARNGLSQHLRWEMGQKPILHLQLTGHFEKTKTFLSALLANSSQLSVSRLQFMKPEDGPLQTEIIFQLDKETK.

In terms of biological role, involved in transformation (genetic competence for DNA uptake). This is Competence protein C (comC) from Haemophilus influenzae (strain ATCC 51907 / DSM 11121 / KW20 / Rd).